A 262-amino-acid polypeptide reads, in one-letter code: Small ribosomal subunit protein mS23 (262 aa).

The span at 242-254 shows a compositional bias: acidic residues; sequence AAEEQETSLDDDA. The tract at residues 242-262 is disordered; the sequence is AAEEQETSLDDDATEKVAVAA.

The protein belongs to the mitochondrion-specific ribosomal protein mS23 family. Component of the mitochondrial small ribosomal subunit.

It is found in the mitochondrion. This is Small ribosomal subunit protein mS23 (rsm25) from Aspergillus niger (strain ATCC MYA-4892 / CBS 513.88 / FGSC A1513).